Reading from the N-terminus, the 585-residue chain is Folylpolyglutamate synthase, mitochondrial (585 aa).

Residues 1–39 (MSRARCHALFLAAVSPRGATTRVAVRRGLSAWPVLQEPD) constitute a mitochondrion transit peptide. Residue 103-106 (GKGS) participates in ATP binding. Residues S127, E198, and H226 each coordinate Mg(2+). ATP is bound by residues R361 and D375. The disordered stretch occupies residues 477 to 497 (EEQVSPDPWSTPGQEQDGPAS). S537 carries the phosphoserine modification.

Belongs to the folylpolyglutamate synthase family. Monomer. It depends on a monovalent cation as a cofactor.

It localises to the mitochondrion inner membrane. Its subcellular location is the mitochondrion matrix. The protein localises to the cytoplasm. The catalysed reaction is (6S)-5,6,7,8-tetrahydrofolyl-(gamma-L-Glu)(n) + L-glutamate + ATP = (6S)-5,6,7,8-tetrahydrofolyl-(gamma-L-Glu)(n+1) + ADP + phosphate + H(+). Its pathway is cofactor biosynthesis; tetrahydrofolylpolyglutamate biosynthesis. Functionally, catalyzes conversion of folates to polyglutamate derivatives allowing concentration of folate compounds in the cell and the intracellular retention of these cofactors, which are important substrates for most of the folate-dependent enzymes that are involved in one-carbon transfer reactions involved in purine, pyrimidine and amino acid synthesis. The protein is Folylpolyglutamate synthase, mitochondrial (FPGS) of Bos taurus (Bovine).